Here is a 356-residue protein sequence, read N- to C-terminus: Alanine racemase (356 aa).

Residue Lys-35 is the Proton acceptor; specific for D-alanine of the active site. Lys-35 is subject to N6-(pyridoxal phosphate)lysine. Arg-130 serves as a coordination point for substrate. The Proton acceptor; specific for L-alanine role is filled by Tyr-253. Met-301 contacts substrate.

This sequence belongs to the alanine racemase family. It depends on pyridoxal 5'-phosphate as a cofactor.

It carries out the reaction L-alanine = D-alanine. Its pathway is amino-acid biosynthesis; D-alanine biosynthesis; D-alanine from L-alanine: step 1/1. Its function is as follows. Catalyzes the interconversion of L-alanine and D-alanine. May also act on other amino acids. The polypeptide is Alanine racemase (alr) (Paraburkholderia phytofirmans (strain DSM 17436 / LMG 22146 / PsJN) (Burkholderia phytofirmans)).